Reading from the N-terminus, the 353-residue chain is Guanine nucleotide-binding protein subunit alpha (353 aa).

The interval 1-25 (MGCGMSTEDKEGKARNEEIENQLKR) is disordered. Residue glycine 2 is the site of N-myristoyl glycine attachment. A lipid anchor (S-palmitoyl cysteine) is attached at cysteine 3. Basic and acidic residues predominate over residues 7 to 25 (TEDKEGKARNEEIENQLKR). One can recognise a G-alpha domain in the interval 32–353 (NEIKMLLLGA…QENLRLCGLI (322 aa)). The tract at residues 35–48 (KMLLLGAGESGKST) is G1 motif. 14 residues coordinate GTP: glutamate 43, serine 44, glycine 45, lysine 46, serine 47, threonine 48, aspartate 150, leucine 175, threonine 181, glycine 203, asparagine 269, lysine 270, aspartate 272, and alanine 325. A Mg(2+)-binding site is contributed by serine 47. The tract at residues 173–181 (DVLRSRVKT) is G2 motif. Mg(2+) is bound at residue threonine 181. The tract at residues 196-205 (YRMFDVGGQR) is G3 motif. Positions 265-272 (ILFLNKID) are G4 motif. The interval 323–328 (TCATDT) is G5 motif.

It belongs to the G-alpha family. G(q) subfamily. As to quaternary structure, g proteins are composed of 3 units; alpha, beta and gamma. The alpha chain contains the guanine nucleotide binding site. Mg(2+) serves as cofactor.

Its function is as follows. Guanine nucleotide-binding proteins (G proteins) are involved as modulators or transducers in various transmembrane signaling systems. This is Guanine nucleotide-binding protein subunit alpha (fadA) from Emericella nidulans (strain FGSC A4 / ATCC 38163 / CBS 112.46 / NRRL 194 / M139) (Aspergillus nidulans).